The chain runs to 284 residues: uncharacterized protein (284 aa).

This is an uncharacterized protein from Streptomyces fradiae (Streptomyces roseoflavus).